The following is an 848-amino-acid chain: Leucine--tRNA ligase (848 aa).

Positions 1-16 (MCPEQPHDTRAERDEM) are enriched in basic and acidic residues. The interval 1–30 (MCPEQPHDTRAERDEMSEQTQQAAQPAETA) is disordered. Positions 18-30 (EQTQQAAQPAETA) are enriched in low complexity. A 'HIGH' region motif is present at residues 69-79 (PYPSGDLHMGH). The 'KMSKS' region motif lies at 614–618 (KMSKS). K617 is an ATP binding site.

It belongs to the class-I aminoacyl-tRNA synthetase family.

Its subcellular location is the cytoplasm. The catalysed reaction is tRNA(Leu) + L-leucine + ATP = L-leucyl-tRNA(Leu) + AMP + diphosphate. The polypeptide is Leucine--tRNA ligase (Nocardioides sp. (strain ATCC BAA-499 / JS614)).